We begin with the raw amino-acid sequence, 374 residues long: Cyclin-dependent kinase 9 (374 aa).

One can recognise a Protein kinase domain in the interval 19–318; it reads YEKLAKIGQG…SDDALNHDFF (300 aa). ATP-binding positions include 25 to 33 and lysine 48; that span reads IGQGTFGEV. The active-site Proton acceptor is the aspartate 151. The disordered stretch occupies residues 345 to 374; that stretch reads PRRRGHMPQQPANQNRNPATTSQSEFDRVF. The segment covering 354–368 has biased composition (polar residues); sequence QPANQNRNPATTSQS.

The protein belongs to the protein kinase superfamily. CMGC Ser/Thr protein kinase family. CDC2/CDKX subfamily. As to quaternary structure, component of the super elongation complex (SEC). Associates with ccnt1/cyclin-T1, ccnt2/cyclin-T2 or ccnk/cyclin-K to form active P-TEFb.

The protein resides in the nucleus. Its subcellular location is the cytoplasm. The protein localises to the PML body. It catalyses the reaction L-seryl-[protein] + ATP = O-phospho-L-seryl-[protein] + ADP + H(+). The catalysed reaction is L-threonyl-[protein] + ATP = O-phospho-L-threonyl-[protein] + ADP + H(+). The enzyme catalyses [DNA-directed RNA polymerase] + ATP = phospho-[DNA-directed RNA polymerase] + ADP + H(+). Protein kinase involved in the regulation of transcription. Member of the cyclin-dependent kinase pair (CDK9/cyclin-T) complex, also called positive transcription elongation factor b (P-TEFb), which facilitates the transition from abortive to productive elongation by phosphorylating the CTD (C-terminal domain) of the large subunit of RNA polymerase II (RNAP II) polr2a, supt5h and rdbp. This complex is inactive when in the 7SK snRNP complex form. Regulates cytokine inducible transcription networks by facilitating promoter recognition of target transcription factors. P-TEFb is also involved in cotranscriptional histone modification, mRNA processing and mRNA export. In Danio rerio (Zebrafish), this protein is Cyclin-dependent kinase 9.